Here is a 550-residue protein sequence, read N- to C-terminus: Methionine--tRNA ligase (550 aa).

The 'HIGH' region signature appears at 10–22; the sequence is LPYPNNSSPHLGN. Positions 336 to 340 match the 'KMSKS' region motif; sequence KFSKS. Residue Lys-339 coordinates ATP.

Belongs to the class-I aminoacyl-tRNA synthetase family.

The enzyme catalyses tRNA(Met) + L-methionine + ATP = L-methionyl-tRNA(Met) + AMP + diphosphate. The polypeptide is Methionine--tRNA ligase (MARS) (Acanthamoeba polyphaga mimivirus (APMV)).